Here is a 170-residue protein sequence, read N- to C-terminus: Myelin-associated oligodendrocyte basic protein (170 aa).

The disordered stretch occupies residues 69–170; sequence SRRATSPQRP…GSPTRAPRFW (102 aa). Low complexity predominate over residues 82 to 92; that stretch reads PAASPVVVRAP. Ser-85, Ser-98, and Ser-107 each carry phosphoserine. 2 tandem repeats follow at residues 93 to 101 and 105 to 110. A 3 X 9 AA approximate tandem repeats region spans residues 93–115; sequence PAKPKSPLMPAKPRSPPRPAKPR. A 3; half-length repeat occupies 111–115; it reads PAKPR. Basic and acidic residues predominate over residues 118 to 130; that stretch reads SRTERQPRPRPEV. The segment covering 138-151 has biased composition (low complexity); that stretch reads KPPQKSKQPARSSP.

The protein localises to the cytoplasm. It is found in the perinuclear region. May play a role in compacting or stabilizing the myelin sheath possibly by binding the negatively charged acidic phospholipids of the cytoplasmic membrane. The protein is Myelin-associated oligodendrocyte basic protein (Mobp) of Mus musculus (Mouse).